The primary structure comprises 93 residues: Small ribosomal subunit protein uS19 (93 aa).

Disordered regions lie at residues 1–24 (MPRS…AQNE) and 73–93 (EFAP…GRRR). Composition is skewed to basic and acidic residues over residues 9-21 (PFVD…KVDA) and 81-93 (KGHE…GRRR).

It belongs to the universal ribosomal protein uS19 family.

Its function is as follows. Protein S19 forms a complex with S13 that binds strongly to the 16S ribosomal RNA. The polypeptide is Small ribosomal subunit protein uS19 (Kineococcus radiotolerans (strain ATCC BAA-149 / DSM 14245 / SRS30216)).